The following is a 572-amino-acid chain: MSRKMFSCDFETTTKLDDCRVWAYGYMEIGNLDNYKIGNSLDEFMQWVMEIQADLYFHNLKFDGAFIVNWLEQHGFKWSNEGLPNTYNTIISKMGQWYMIDICFGYRGKRKLHTVIYDSLKKLPFPVKKIAKDFQLPLLKGDIDYHTERPVGHEITPEEYEYIKNDIEIIARALDIQFKQGLDRMTAGSDSLKGFKDILSTKKFNKVFPKLSLPMDKEIRKAYRGGFTWLNDKYKEKEIGEGMVFDVNSLYPSQMYSRPLPYGAPIVFQGKYEKDEQYPLYIQRIRFEFELKEGYIPTIQIKKNPFFKGNEYLKNSGVEPVELYLTNVDLELIQEHYELYNVEYIDGFKFREKTGLFKDFIDKWTYVKTHEEGAKKQLAKLMLNSLYGKFASNPDVTGKVPYLKDDGSLGFRVGDEEYKDPVYTPMGVFITAWARFTTITAAQACYDRIIYCDTDSIHLTGTEVPEIIKDIVDPKKLGYWAHESTFKRAKYLRQKTYIQDIYVKEVDGKLKECSPDEATTTKFSVKCAGMTDTIKKKVTFDNFAVGFSSMGKPKPVQVNGGVVLVDSVFTIK.

The tract at residues 1–222 (MSRKMFSCDF…LPMDKEIRKA (222 aa)) is 3'-5' exonuclease and strand displacement activities. The interval 56-66 (YFHNLKFDGAF) is interaction with the primer terminal protein. The Mg(2+) site is built by D142 and D166. The interval 223–226 (YRGG) is DNA-binding; Involved in the formation of a stable complex between TP and phi29 DNA polymerase. Residues 227 to 572 (FTWLNDKYKE…VLVDSVFTIK (346 aa)) are initiation, polymerization and pyrophosphorolytic activities. Mg(2+) contacts are provided by D246 and V247. 5-methyl-UTP-binding residues include Y251, K368, and K380. Residues D453 and D455 each coordinate Mg(2+). D455 lines the 5-methyl-UTP pocket.

This sequence belongs to the DNA polymerase type-B family. Interacts with the primer terminal protein; this interaction allows the initiation of TP-primed DNA replication at both viral DNA ends. Interacts with DNA. Mg(2+) serves as cofactor.

The enzyme catalyses DNA(n) + a 2'-deoxyribonucleoside 5'-triphosphate = DNA(n+1) + diphosphate. In terms of biological role, polymerase responsible for protein-primed viral DNA replication by strand displacement with high processivity and fidelity. To start replication, the DNA polymerase forms a heterodimer with a free primer terminal protein (TP), recognizes the replication origins at both 5' ends of the linear chromosome, and initiates replication using as primer the OH-group of Ser-232 of the TP. This polymerase possesses three enzymatic activities: DNA synthesis (polymerase), primer terminal protein (TP) deoxynucleotidylation, which is the formation of a covalent linkage (phosphoester) between the hydroxyl group of a specific serine residue in TP and 5'-dAMP, a reaction directed by the third T at the 3' end, and 3' to 5' exonuclease activity. Exonuclease activity has a proofreading purpose. Since the polymerase initiates the replication on the third thymine, the TP-dAMP initiation product translocates backwards to recover the template information of the 2 terminal nucleotide (sliding back-mechanism). The polypeptide is DNA polymerase (Bacillus phage Nf (Bacteriophage Nf)).